The chain runs to 66 residues: Large ribosomal subunit protein uL29 (66 aa).

This sequence belongs to the universal ribosomal protein uL29 family.

This Helicobacter pylori (strain HPAG1) protein is Large ribosomal subunit protein uL29.